A 209-amino-acid polypeptide reads, in one-letter code: 60S ribosomal subunit assembly/export protein loc-1 (209 aa).

2 disordered regions span residues 1 to 53 (MAPT…SKGR) and 135 to 209 (REAR…AAPE). Composition is skewed to basic and acidic residues over residues 20–33 (GSKD…DGVL) and 135–159 (REAR…TKDS). Residues 126–170 (IKARQMEEIREARRAEAEKKEAERKARLEETKDSLRKKRKRSKQS) are a coiled coil.

This sequence belongs to the LOC1 family. In terms of assembly, component of the 66S pre-ribosomal particle.

It is found in the nucleus. The protein resides in the nucleolus. In terms of biological role, required for efficient assembly and nuclear export of the 60S ribosomal subunit. This Neurospora crassa (strain ATCC 24698 / 74-OR23-1A / CBS 708.71 / DSM 1257 / FGSC 987) protein is 60S ribosomal subunit assembly/export protein loc-1 (loc-1).